The sequence spans 336 residues: Potassium channel subfamily K member 1 (336 aa).

The Cytoplasmic portion of the chain corresponds to 1–20; sequence MLQSLAGSSCVRLVERHRSA. The chain crosses the membrane as a helical span at residues 21–41; it reads WCFGFLVLGYLLYLVFGAVVF. At 42-103 the chain is on the extracellular side; that stretch reads SSVELPYEDL…SNASGNWNWD (62 aa). An N-linked (GlcNAc...) asparagine glycan is attached at N95. An intramembrane region (helical) is located at residues 104-116; that stretch reads FTSALFFASTVLS. An intramembrane segment occupies 117–122; that stretch reads TTGYGH. The selectivity filter 1 stretch occupies residues 117 to 122; it reads TTGYGH. Topologically, residues 123 to 132 are extracellular; sequence TVPLSDGGKA. The chain crosses the membrane as a helical span at residues 133–156; it reads FCIIYSVIGIPFTLLFLTAVVQRV. At 157–181 the chain is on the cytoplasmic side; that stretch reads TIHVTRRPVLYFHVRWGFSKQAVAI. The helical transmembrane segment at 182 to 202 threads the bilayer; that stretch reads VHAVLLGVVTVSCFFFIPAAV. Topologically, residues 203–211 are extracellular; sequence FSVLEDDWN. The segment at residues 212 to 224 is an intramembrane region (helical); sequence FLESFYFCFISLS. Residues 225 to 230 are selectivity filter 2; that stretch reads TIGLGD. Residues 225-231 lie within the membrane without spanning it; sequence TIGLGDY. Residues 232 to 243 lie on the Extracellular side of the membrane; sequence VPGEGYNQKFRE. A helical transmembrane segment spans residues 244–267; it reads LYKIGITCYLLLGLIAMLVVLETF. Over 268-336 the chain is Cytoplasmic; sequence CELHELKKFR…PALADGASDH (69 aa). Residue K274 forms a Glycyl lysine isopeptide (Lys-Gly) (interchain with G-Cter in SUMO) linkage. Residues 293–299 are important for intracellular retention in recycling endosomes; it reads IIEHDQL. Positions 307–336 are disordered; that stretch reads QAAGVQEDQKQNEPFVSPQPPALADGASDH.

This sequence belongs to the two pore domain potassium channel (TC 1.A.1.8) family. Homodimer; disulfide-linked. Heterodimer with KCNK2; disulfide-linked. In astrocytes, forms mostly heterodimeric potassium channels with KCNK2, with only a minor proportion of functional channels containing homodimeric KCNK1. Interacts with KCNK3 and KCNK9, forming functional heterodimeric channels. Interacts with GNG4. Identified in a complex with PSD and ARF6; interacts only with PSD that is bound to ARF6. Interacts with UBE2I. In terms of processing, sumoylation is controversial. Sumoylated by UBE2I. Not sumoylated when expressed in xenopus oocytes or mammalian cells. Sumoylation inactivates the channel, but does not interfere with expression at the cell membrane. Sumoylation of a single subunit is sufficient to silence the dimeric channel. Sumoylation of KCNK1 is sufficient to silence heterodimeric channels formed by KCNK1 and KCNK3 or KCNK9. Desumoylated by SENP1; this activates the channel. Desumoylated by SENP1; this strongly increases halothane-mediated activation of heterodimeric channels formed with KCNK9. SENP1 treatment has no effect.

The protein localises to the cell membrane. Its subcellular location is the recycling endosome. The protein resides in the synaptic cell membrane. It localises to the cytoplasmic vesicle. It is found in the perikaryon. The protein localises to the cell projection. Its subcellular location is the dendrite. The protein resides in the apical cell membrane. The catalysed reaction is K(+)(in) = K(+)(out). It catalyses the reaction NH4(+)(in) = NH4(+)(out). It carries out the reaction Na(+)(in) = Na(+)(out). The enzyme catalyses Rb(+)(in) = Rb(+)(out). The catalysed reaction is Cs(+)(in) = Cs(+)(out). It catalyses the reaction Li(+)(in) = Li(+)(out). It carries out the reaction L-glutamate(out) = L-glutamate(in). The enzyme catalyses chloride(in) = chloride(out). Ion channel that contributes to passive transmembrane potassium transport and to the regulation of the resting membrane potential in brain astrocytes, but also in kidney and in other tissues. Forms dimeric channels through which potassium ions pass in accordance with their electrochemical gradient. The channel is selective for K(+) ions at physiological potassium concentrations and at neutral pH, but becomes permeable to Na(+) at subphysiological K(+) levels and upon acidification of the extracellular medium. The homodimer has very low potassium channel activity, when expressed in heterologous systems, and can function as weakly inward rectifying potassium channel. Channel activity is modulated by activation of serotonin receptors. Heterodimeric channels containing KCNK1 and KCNK2 have much higher activity, and may represent the predominant form in astrocytes. Heterodimeric channels containing KCNK1 and KCNK3 or KCNK9 have much higher activity. Heterodimeric channels formed by KCNK1 and KCNK9 may contribute to halothane-sensitive currents. Mediates outward rectifying potassium currents in dentate gyrus granule cells and contributes to the regulation of their resting membrane potential. Contributes to the regulation of action potential firing in dentate gyrus granule cells and down-regulates their intrinsic excitability. In astrocytes, the heterodimer formed by KCNK1 and KCNK2 is required for rapid glutamate release in response to activation of G-protein coupled receptors, such as F2R and CNR1. Required for normal ion and water transport in the kidney. Contributes to the regulation of the resting membrane potential of pancreatic beta cells. The low channel activity of homodimeric KCNK1 may be due to sumoylation. The low channel activity may be due to rapid internalization from the cell membrane and retention in recycling endosomes. Permeable to monovalent cations with ion selectivity for K(+) &gt; Rb(+) &gt;&gt; NH4(+) &gt;&gt; Cs(+) = Na(+) = Li(+). The sequence is that of Potassium channel subfamily K member 1 from Bos taurus (Bovine).